The sequence spans 243 residues: Fibroblast growth factor 12 (243 aa).

2 disordered regions span residues 1-39 (MAAA…DGRS) and 216-243 (IGEK…QDST). Positions 11 to 38 (RQKRQARESNSDRVSASKRRSSPSKDGR) match the Bipartite nuclear localization signal motif.

It belongs to the heparin-binding growth factors family. In terms of assembly, interacts with the C-terminal region of SCN9A. Brain, eye and testis; highly expressed in embryonic retina, olfactory epithelium, olfactory bulb, and in a segmental pattern of the body wall; in adult olfactory bulb, less in cerebellum, deep cerebellar nuclei, cortex and multiple midbrain structures.

The protein localises to the nucleus. Functionally, involved in nervous system development and function. Involved in the positive regulation of voltage-gated sodium channel activity. Promotes neuronal excitability by elevating the voltage dependence of neuronal sodium channel SCN8A fast inactivation. The sequence is that of Fibroblast growth factor 12 (FGF12) from Homo sapiens (Human).